The chain runs to 51 residues: Large ribosomal subunit protein eL39 (51 aa).

The protein belongs to the eukaryotic ribosomal protein eL39 family.

The protein is Large ribosomal subunit protein eL39 of Methanococcus aeolicus (strain ATCC BAA-1280 / DSM 17508 / OCM 812 / Nankai-3).